The primary structure comprises 580 residues: 2-isopropylmalate synthase (580 aa).

Positions methionine 1 to threonine 11 are enriched in polar residues. The tract at residues methionine 1 to arginine 37 is disordered. The region spanning proline 61–aspartate 334 is the Pyruvate carboxyltransferase domain. Residues aspartate 70, histidine 273, histidine 275, and asparagine 309 each contribute to the Mg(2+) site. A regulatory domain region spans residues glutamate 476–glycine 580.

The protein belongs to the alpha-IPM synthase/homocitrate synthase family. LeuA type 2 subfamily. As to quaternary structure, homodimer. Mg(2+) is required as a cofactor.

Its subcellular location is the cytoplasm. It carries out the reaction 3-methyl-2-oxobutanoate + acetyl-CoA + H2O = (2S)-2-isopropylmalate + CoA + H(+). The protein operates within amino-acid biosynthesis; L-leucine biosynthesis; L-leucine from 3-methyl-2-oxobutanoate: step 1/4. In terms of biological role, catalyzes the condensation of the acetyl group of acetyl-CoA with 3-methyl-2-oxobutanoate (2-ketoisovalerate) to form 3-carboxy-3-hydroxy-4-methylpentanoate (2-isopropylmalate). The polypeptide is 2-isopropylmalate synthase (Nocardia farcinica (strain IFM 10152)).